A 260-amino-acid chain; its full sequence is Hemin import ATP-binding protein HmuV (260 aa).

The 237-residue stretch at Leu6 to Arg242 folds into the ABC transporter domain. Position 38–45 (Gly38–Ser45) interacts with ATP.

This sequence belongs to the ABC transporter superfamily. Heme (hemin) importer (TC 3.A.1.14.5) family. The complex is composed of two ATP-binding proteins (HmuV), two transmembrane proteins (HmuU) and a solute-binding protein (HmuT).

It localises to the cell inner membrane. Part of the ABC transporter complex HmuTUV involved in hemin import. Responsible for energy coupling to the transport system. In Vibrio parahaemolyticus serotype O3:K6 (strain RIMD 2210633), this protein is Hemin import ATP-binding protein HmuV.